The sequence spans 1657 residues: Alsin (1657 aa).

RCC1 repeat units lie at residues 60–109 (GEVY…VTDN), 110–168 (GVAY…LSIS), and 169–219 (REIW…LVQC). Residues 432–481 (TGAQAGSSAIGPEGLKDSREEQVKQESMQGKKSSSLVDIREEETEGGSRR) form a disordered region. Positions 445–455 (GLKDSREEQVK) are enriched in basic and acidic residues. Positions 456–467 (QESMQGKKSSSL) are enriched in polar residues. A phosphoserine mark is found at S465, S466, S483, and S492. Phosphothreonine is present on T510. RCC1 repeat units follow at residues 526–577 (TEVW…LTAK) and 578–628 (SQVY…LVDT). K533 is subject to N6-acetyllysine. Residues 690–885 (GYIASLHELA…ECLALHLGRK (196 aa)) form the DH domain. A PH domain is found at 901–1007 (GKMTDSLRKP…RAISQAVDQA (107 aa)). 8 MORN repeats span residues 1049–1071 (YDGRWLSGKPHGRGVLKWPDGKM), 1072–1094 (YSGMFRNGLEDGYGEYRIPNKAM), 1100–1122 (YVGHWKEGKMCGQGVYSYASGEV), 1123–1145 (FEGCFQDNMRHGHGLLRSGKLTS), 1151–1173 (FIGQWVMDKKAGYGVFDDITRGE), 1175–1197 (YMGMWQDDVCQGNGVVVTQFGLY), 1198–1220 (YEGNFHLNKMMGNGVLLSEDDTI), and 1221–1244 (YEGEFSDDWTLSGKGTLTMPNGDY). S1335 carries the post-translational modification Phosphoserine. A VPS9 domain is found at 1513-1657 (KQPDIALLGF…YYQIQREKLN (145 aa)).

Forms a heteromeric complex with ALS2CL. Interacts with ALS2CL.

In terms of biological role, may act as a GTPase regulator. Controls survival and growth of spinal motoneurons. This is Alsin (ALS2) from Pan troglodytes (Chimpanzee).